Consider the following 100-residue polypeptide: Urease subunit gamma (100 aa).

This sequence belongs to the urease gamma subunit family. Heterotrimer of UreA (gamma), UreB (beta) and UreC (alpha) subunits. Three heterotrimers associate to form the active enzyme.

It is found in the cytoplasm. It catalyses the reaction urea + 2 H2O + H(+) = hydrogencarbonate + 2 NH4(+). Its pathway is nitrogen metabolism; urea degradation; CO(2) and NH(3) from urea (urease route): step 1/1. This is Urease subunit gamma from Pseudomonas fluorescens (strain Pf0-1).